A 1317-amino-acid polypeptide reads, in one-letter code: DNA-directed RNA polymerase subunit beta' (1317 aa).

C60, C62, C75, and C78 together coordinate Zn(2+). The interval 183 to 209 (ELEDEGAKSDVKRKVRDGGEREMRQLR) is disordered. 3 residues coordinate Mg(2+): D535, D537, and D539. 4 residues coordinate Zn(2+): C890, C967, C974, and C977.

It belongs to the RNA polymerase beta' chain family. In terms of assembly, the RNAP catalytic core consists of 2 alpha, 1 beta, 1 beta' and 1 omega subunit. When a sigma factor is associated with the core the holoenzyme is formed, which can initiate transcription. It depends on Mg(2+) as a cofactor. The cofactor is Zn(2+).

The enzyme catalyses RNA(n) + a ribonucleoside 5'-triphosphate = RNA(n+1) + diphosphate. Functionally, DNA-dependent RNA polymerase catalyzes the transcription of DNA into RNA using the four ribonucleoside triphosphates as substrates. This Mycolicibacterium vanbaalenii (strain DSM 7251 / JCM 13017 / BCRC 16820 / KCTC 9966 / NRRL B-24157 / PYR-1) (Mycobacterium vanbaalenii) protein is DNA-directed RNA polymerase subunit beta'.